The sequence spans 728 residues: 1,4-alpha-glucan branching enzyme GlgB (728 aa).

D409 serves as the catalytic Nucleophile. The active-site Proton donor is the E462.

Belongs to the glycosyl hydrolase 13 family. GlgB subfamily. Monomer.

It carries out the reaction Transfers a segment of a (1-&gt;4)-alpha-D-glucan chain to a primary hydroxy group in a similar glucan chain.. It participates in glycan biosynthesis; glycogen biosynthesis. Its function is as follows. Catalyzes the formation of the alpha-1,6-glucosidic linkages in glycogen by scission of a 1,4-alpha-linked oligosaccharide from growing alpha-1,4-glucan chains and the subsequent attachment of the oligosaccharide to the alpha-1,6 position. The protein is 1,4-alpha-glucan branching enzyme GlgB of Cereibacter sphaeroides (strain ATCC 17023 / DSM 158 / JCM 6121 / CCUG 31486 / LMG 2827 / NBRC 12203 / NCIMB 8253 / ATH 2.4.1.) (Rhodobacter sphaeroides).